We begin with the raw amino-acid sequence, 187 residues long: NADH-quinone oxidoreductase subunit B (187 aa).

[4Fe-4S] cluster is bound by residues C66, C67, C131, and C161.

It belongs to the complex I 20 kDa subunit family. NDH-1 is composed of 14 different subunits. Subunits NuoB, C, D, E, F, and G constitute the peripheral sector of the complex. [4Fe-4S] cluster is required as a cofactor.

The protein resides in the cell inner membrane. The catalysed reaction is a quinone + NADH + 5 H(+)(in) = a quinol + NAD(+) + 4 H(+)(out). In terms of biological role, NDH-1 shuttles electrons from NADH, via FMN and iron-sulfur (Fe-S) centers, to quinones in the respiratory chain. Couples the redox reaction to proton translocation (for every two electrons transferred, four hydrogen ions are translocated across the cytoplasmic membrane), and thus conserves the redox energy in a proton gradient. The protein is NADH-quinone oxidoreductase subunit B of Rhizorhabdus wittichii (strain DSM 6014 / CCUG 31198 / JCM 15750 / NBRC 105917 / EY 4224 / RW1) (Sphingomonas wittichii).